A 449-amino-acid polypeptide reads, in one-letter code: Trigger factor (449 aa).

The PPIase FKBP-type domain maps to 162–242 (GDFVTIDMTV…VRAVREKQVP (81 aa)). Positions 428–449 (APVNLEGGSTPAAEAEPAVSEA) are disordered. Positions 438 to 449 (PAAEAEPAVSEA) are enriched in low complexity.

It belongs to the FKBP-type PPIase family. Tig subfamily.

The protein resides in the cytoplasm. The catalysed reaction is [protein]-peptidylproline (omega=180) = [protein]-peptidylproline (omega=0). Involved in protein export. Acts as a chaperone by maintaining the newly synthesized protein in an open conformation. Functions as a peptidyl-prolyl cis-trans isomerase. This chain is Trigger factor, found in Acidothermus cellulolyticus (strain ATCC 43068 / DSM 8971 / 11B).